A 378-amino-acid polypeptide reads, in one-letter code: Cytochrome P450 2C15 (378 aa).

Cys323 serves as a coordination point for heme.

It belongs to the cytochrome P450 family. Requires heme as cofactor.

The protein resides in the endoplasmic reticulum membrane. It localises to the microsome membrane. It catalyses the reaction an organic molecule + reduced [NADPH--hemoprotein reductase] + O2 = an alcohol + oxidized [NADPH--hemoprotein reductase] + H2O + H(+). Functionally, cytochromes P450 are a group of heme-thiolate monooxygenases. In liver microsomes, this enzyme is involved in an NADPH-dependent electron transport pathway. It oxidizes a variety of structurally unrelated compounds, including steroids, fatty acids, and xenobiotics. The sequence is that of Cytochrome P450 2C15 (CYP2C15) from Oryctolagus cuniculus (Rabbit).